Reading from the N-terminus, the 259-residue chain is ATP synthase subunit b 3 (259 aa).

Residues 5-27 (WWTLGLQAINVLILIWILSRFLF) traverse the membrane as a helical segment.

It belongs to the ATPase B chain family. As to quaternary structure, F-type ATPases have 2 components, F(1) - the catalytic core - and F(0) - the membrane proton channel. F(1) has five subunits: alpha(3), beta(3), gamma(1), delta(1), epsilon(1). F(0) has three main subunits: a(1), b(2) and c(10-14). The alpha and beta chains form an alternating ring which encloses part of the gamma chain. F(1) is attached to F(0) by a central stalk formed by the gamma and epsilon chains, while a peripheral stalk is formed by the delta and b chains.

The protein resides in the cell inner membrane. Its function is as follows. F(1)F(0) ATP synthase produces ATP from ADP in the presence of a proton or sodium gradient. F-type ATPases consist of two structural domains, F(1) containing the extramembraneous catalytic core and F(0) containing the membrane proton channel, linked together by a central stalk and a peripheral stalk. During catalysis, ATP synthesis in the catalytic domain of F(1) is coupled via a rotary mechanism of the central stalk subunits to proton translocation. In terms of biological role, component of the F(0) channel, it forms part of the peripheral stalk, linking F(1) to F(0). This Beijerinckia indica subsp. indica (strain ATCC 9039 / DSM 1715 / NCIMB 8712) protein is ATP synthase subunit b 3.